The chain runs to 217 residues: Cytidylate kinase (217 aa).

9–17 contributes to the ATP binding site; that stretch reads GPSSSGKSS.

The protein belongs to the cytidylate kinase family. Type 1 subfamily.

It is found in the cytoplasm. It catalyses the reaction CMP + ATP = CDP + ADP. The catalysed reaction is dCMP + ATP = dCDP + ADP. The sequence is that of Cytidylate kinase from Mycoplasma pneumoniae (strain ATCC 29342 / M129 / Subtype 1) (Mycoplasmoides pneumoniae).